The chain runs to 431 residues: uncharacterized protein (431 aa).

Transmembrane regions (helical) follow at residues Leu-42–Leu-62 and Val-74–Leu-94. N-linked (GlcNAc...) asparagine; by host glycosylation is present at Asn-105. 5 helical membrane passes run Leu-111 to Ile-131, Ala-153 to Pro-173, Met-202 to Tyr-222, Val-236 to Leu-256, and Ala-279 to Phe-299.

It is found in the membrane. This is an uncharacterized protein from Homo sapiens (Human).